A 61-amino-acid polypeptide reads, in one-letter code: Large ribosomal subunit protein uL30 (61 aa).

It belongs to the universal ribosomal protein uL30 family. As to quaternary structure, part of the 50S ribosomal subunit.

This chain is Large ribosomal subunit protein uL30, found in Latilactobacillus sakei subsp. sakei (strain 23K) (Lactobacillus sakei subsp. sakei).